Here is a 216-residue protein sequence, read N- to C-terminus: Probable GTP-binding protein EngB (216 aa).

One can recognise an EngB-type G domain in the interval 37–214; that stretch reads GSVEIAFAGR…RAAMIRLLDE (178 aa). GTP-binding positions include 45–52, 72–76, 92–95, 159–162, and 193–195; these read GRSNVGKS, GRTQE, DMPG, TKAD, and TSS. Mg(2+) contacts are provided by S52 and T74.

Belongs to the TRAFAC class TrmE-Era-EngA-EngB-Septin-like GTPase superfamily. EngB GTPase family. Mg(2+) is required as a cofactor.

In terms of biological role, necessary for normal cell division and for the maintenance of normal septation. The protein is Probable GTP-binding protein EngB of Rhodopseudomonas palustris (strain TIE-1).